We begin with the raw amino-acid sequence, 547 residues long: CTP synthase (547 aa).

An amidoligase domain region spans residues M1–I265. S13 lines the CTP pocket. S13 contributes to the UTP binding site. Residues S14–L19 and D71 contribute to the ATP site. Mg(2+) contacts are provided by D71 and E139. CTP contacts are provided by residues D146–E148, K186–Q191, and K222. Residues K186–Q191 and K222 each bind UTP. One can recognise a Glutamine amidotransferase type-1 domain in the interval K291–L546. G353 is a binding site for L-glutamine. Residue C380 is the Nucleophile; for glutamine hydrolysis of the active site. Residues L381–Q384, E404, and R474 contribute to the L-glutamine site. Catalysis depends on residues H519 and E521.

This sequence belongs to the CTP synthase family. In terms of assembly, homotetramer.

It carries out the reaction UTP + L-glutamine + ATP + H2O = CTP + L-glutamate + ADP + phosphate + 2 H(+). The enzyme catalyses L-glutamine + H2O = L-glutamate + NH4(+). It catalyses the reaction UTP + NH4(+) + ATP = CTP + ADP + phosphate + 2 H(+). It participates in pyrimidine metabolism; CTP biosynthesis via de novo pathway; CTP from UDP: step 2/2. Allosterically activated by GTP, when glutamine is the substrate; GTP has no effect on the reaction when ammonia is the substrate. The allosteric effector GTP functions by stabilizing the protein conformation that binds the tetrahedral intermediate(s) formed during glutamine hydrolysis. Inhibited by the product CTP, via allosteric rather than competitive inhibition. Catalyzes the ATP-dependent amination of UTP to CTP with either L-glutamine or ammonia as the source of nitrogen. Regulates intracellular CTP levels through interactions with the four ribonucleotide triphosphates. The sequence is that of CTP synthase from Jannaschia sp. (strain CCS1).